Reading from the N-terminus, the 201-residue chain is 3-isopropylmalate dehydratase small subunit (201 aa).

This sequence belongs to the LeuD family. LeuD type 1 subfamily. In terms of assembly, heterodimer of LeuC and LeuD.

The enzyme catalyses (2R,3S)-3-isopropylmalate = (2S)-2-isopropylmalate. It functions in the pathway amino-acid biosynthesis; L-leucine biosynthesis; L-leucine from 3-methyl-2-oxobutanoate: step 2/4. Catalyzes the isomerization between 2-isopropylmalate and 3-isopropylmalate, via the formation of 2-isopropylmaleate. The protein is 3-isopropylmalate dehydratase small subunit of Sinorhizobium fredii (strain NBRC 101917 / NGR234).